The sequence spans 537 residues: Tyrosine-protein kinase Fyn (537 aa).

G2 is lipidated: N-myristoyl glycine. Residues C3 and C6 are each lipidated (S-palmitoyl cysteine). T12 bears the Phosphothreonine; by PKC mark. Residues 14–35 (LTEERDGSLNQSSGYRYGTDPT) form a disordered region. 2 positions are modified to phosphoserine: S21 and S26. One can recognise an SH3 domain in the interval 82–143 (TGVTLFVALY…PSNYVAPVDS (62 aa)). One can recognise an SH2 domain in the interval 149–246 (WYFGKLGRKD…GLCCRLVVPC (98 aa)). Y185 carries the post-translational modification Phosphotyrosine. The Protein kinase domain maps to 271-524 (LQLIKRLGNG…YLQSFLEDYF (254 aa)). Residues 277–285 (LGNGQFGEV) and K299 each bind ATP. D390 serves as the catalytic Proton acceptor. The residue at position 420 (Y420) is a Phosphotyrosine; by autocatalysis. At Y531 the chain carries Phosphotyrosine; by CSK.

It belongs to the protein kinase superfamily. Tyr protein kinase family. SRC subfamily. Interacts (via its SH3 domain) with PIK3R1 and PRMT8. Interacts with FYB1, PAG1, and SH2D1A. Interacts with CD79A (tyrosine-phosphorylated form); the interaction increases FYN activity. Interacts (via SH2 domain) with CSF1R (tyrosine phosphorylated). Interacts with TOM1L1 (phosphorylated form). Interacts with KDR (tyrosine phosphorylated). Interacts (via SH3 domain) with KLHL2 (via N-terminus). Interacts with SH2D1A and SLAMF1. Interacts with ITCH; the interaction phosphorylates ITCH and negatively regulates its activity. Interacts with FASLG. Interacts with RUNX3. Interacts with KIT. Interacts with EPHA8; possible downstream effector of EPHA8 in regulation of cell adhesion. Interacts with PTK2/FAK1; this interaction leads to PTK2/FAK1 phosphorylation and activation. Interacts with CAV1; this interaction couples integrins to the Ras-ERK pathway. Interacts with UNC119. Interacts (via SH2 domain) with PTPRH (phosphorylated form). Interacts with PTPRO (phosphorylated form). Interacts with PTPRB (phosphorylated form). Interacts with FYB2. Interacts with DSCAM. Interacts with SKAP1 and FYB1; this interaction promotes the phosphorylation of CLNK. Interacts with NEDD9; in the presence of PTK2. As to quaternary structure, (Microbial infection) Interacts (via its SH3 domain) with hepatitis E virus/HEV protein ORF3. The cofactor is Mn(2+). Post-translationally, autophosphorylated at Tyr-420. Phosphorylation on the C-terminal tail at Tyr-531 by CSK maintains the enzyme in an inactive state. PTPRC/CD45 dephosphorylates Tyr-531 leading to activation. Ultraviolet B (UVB) strongly increase phosphorylation at Thr-12 and kinase activity, and promotes translocation from the cytoplasm to the nucleus. Dephosphorylation at Tyr-420 by PTPN2 negatively regulates T-cell receptor signaling. Phosphorylated at tyrosine residues, which can be enhanced by NTN1. In terms of processing, palmitoylated. Palmitoylation at Cys-3 and Cys-6, probably by ZDHHC21, regulates subcellular location. In terms of tissue distribution, isoform 1 is highly expressed in the brain. Isoform 2 is expressed in cells of hemopoietic lineages, especially T-lymphocytes.

Its subcellular location is the cytoplasm. The protein localises to the nucleus. It localises to the cell membrane. The protein resides in the perikaryon. The enzyme catalyses L-tyrosyl-[protein] + ATP = O-phospho-L-tyrosyl-[protein] + ADP + H(+). With respect to regulation, inhibited by phosphorylation of Tyr-531 by leukocyte common antigen and activated by dephosphorylation of this site. Functionally, non-receptor tyrosine-protein kinase that plays a role in many biological processes including regulation of cell growth and survival, cell adhesion, integrin-mediated signaling, cytoskeletal remodeling, cell motility, immune response and axon guidance. Inactive FYN is phosphorylated on its C-terminal tail within the catalytic domain. Following activation by PKA, the protein subsequently associates with PTK2/FAK1, allowing PTK2/FAK1 phosphorylation, activation and targeting to focal adhesions. Involved in the regulation of cell adhesion and motility through phosphorylation of CTNNB1 (beta-catenin) and CTNND1 (delta-catenin). Regulates cytoskeletal remodeling by phosphorylating several proteins including the actin regulator WAS and the microtubule-associated proteins MAP2 and MAPT. Promotes cell survival by phosphorylating AGAP2/PIKE-A and preventing its apoptotic cleavage. Participates in signal transduction pathways that regulate the integrity of the glomerular slit diaphragm (an essential part of the glomerular filter of the kidney) by phosphorylating several slit diaphragm components including NPHS1, KIRREL1 and TRPC6. Plays a role in neural processes by phosphorylating DPYSL2, a multifunctional adapter protein within the central nervous system, ARHGAP32, a regulator for Rho family GTPases implicated in various neural functions, and SNCA, a small pre-synaptic protein. Involved in reelin signaling by mediating phosphorylation of DAB1 following reelin (RELN)-binding to its receptor. Participates in the downstream signaling pathways that lead to T-cell differentiation and proliferation following T-cell receptor (TCR) stimulation. Phosphorylates PTK2B/PYK2 in response to T-cell receptor activation. Also participates in negative feedback regulation of TCR signaling through phosphorylation of PAG1, thereby promoting interaction between PAG1 and CSK and recruitment of CSK to lipid rafts. CSK maintains LCK and FYN in an inactive form. Promotes CD28-induced phosphorylation of VAV1. In mast cells, phosphorylates CLNK after activation of immunoglobulin epsilon receptor signaling. Can also promote CD244-mediated NK cell activation. This chain is Tyrosine-protein kinase Fyn (FYN), found in Homo sapiens (Human).